The sequence spans 380 residues: Tubulin alpha chain (380 aa).

GTP-binding residues include E46, S115, G119, T120, T154, N181, and N202. E46 contacts Mg(2+). The active site involves E228.

Belongs to the tubulin family. Dimer of alpha and beta chains. A typical microtubule is a hollow water-filled tube with an outer diameter of 25 nm and an inner diameter of 15 nM. Alpha-beta heterodimers associate head-to-tail to form protofilaments running lengthwise along the microtubule wall with the beta-tubulin subunit facing the microtubule plus end conferring a structural polarity. Microtubules usually have 13 protofilaments but different protofilament numbers can be found in some organisms and specialized cells. It depends on Mg(2+) as a cofactor.

It is found in the cytoplasm. It localises to the cytoskeleton. It carries out the reaction GTP + H2O = GDP + phosphate + H(+). Functionally, tubulin is the major constituent of microtubules, a cylinder consisting of laterally associated linear protofilaments composed of alpha- and beta-tubulin heterodimers. Microtubules grow by the addition of GTP-tubulin dimers to the microtubule end, where a stabilizing cap forms. Below the cap, tubulin dimers are in GDP-bound state, owing to GTPase activity of alpha-tubulin. In Encephalitozoon hellem (Microsporidian parasite), this protein is Tubulin alpha chain (TUB1).